A 601-amino-acid polypeptide reads, in one-letter code: Probable translation initiation factor IF-2 (601 aa).

Positions 10-227 (LRAPIVVVLG…VLAGLAQRYL (218 aa)) constitute a tr-type G domain. Residues 19-26 (GHVDAGKT) are G1. A GTP-binding site is contributed by 19–26 (GHVDAGKT). Residues 44–48 (TMTQH) form a G2 region. The segment at 83–86 (DTPG) is G3. Residues 83-87 (DTPGH) and 137-140 (NKID) each bind GTP. The tract at residues 137–140 (NKID) is G4. Positions 205–207 (SAV) are G5.

The protein belongs to the TRAFAC class translation factor GTPase superfamily. Classic translation factor GTPase family. IF-2 subfamily.

Function in general translation initiation by promoting the binding of the formylmethionine-tRNA to ribosomes. Seems to function along with eIF-2. The sequence is that of Probable translation initiation factor IF-2 from Thermofilum pendens (strain DSM 2475 / Hrk 5).